The sequence spans 78 residues: Large ribosomal subunit protein bL28 (78 aa).

The protein belongs to the bacterial ribosomal protein bL28 family.

The chain is Large ribosomal subunit protein bL28 from Synechococcus sp. (strain ATCC 27144 / PCC 6301 / SAUG 1402/1) (Anacystis nidulans).